The sequence spans 147 residues: Flagellar assembly factor FliW (147 aa).

Belongs to the FliW family. As to quaternary structure, interacts with translational regulator CsrA and flagellin(s).

Its subcellular location is the cytoplasm. In terms of biological role, acts as an anti-CsrA protein, binds CsrA and prevents it from repressing translation of its target genes, one of which is flagellin. Binds to flagellin and participates in the assembly of the flagellum. In Treponema denticola (strain ATCC 35405 / DSM 14222 / CIP 103919 / JCM 8153 / KCTC 15104), this protein is Flagellar assembly factor FliW.